We begin with the raw amino-acid sequence, 1379 residues long: MAQTLSFNGRRRVRKFFGKIPEVAEMPNLIEVQKASYDQFLMVEEPKGGRPDEGLQAVFKSVFPITDFSGASMLEFVSYEFEPPKFDVDECRQRDLTYAAPLKVTLRLIVFDIDEDTGAKSIKDIKEQSVYMGDMPLMTNNGTFIVNGTERVIVSQMHRSPGVFFDHDKGKSHSSGKLLFAARVIPYRGSWLDIEFDAKDIVYARIDRRRKIPVTSLLMALGMDGEEILDTFYTKSLYKRDGEGWRIPFKPETLKGAKAITEMVDADTGEVVVEAGKKLTPRLLRQLSDKGLKALKAGDDDLYGNYLAEDIVNYSTGEIYLEAGDEIDEKTLAVILANGFDEIPVLGIDHINVGAYIRNTLSADKNENRQDALFDIYRVMRPGEPPTMESAEAMFNSLFFDAERYDLSAVGRVKMNMRLDLSVEDTVRTLRKDDILAVVKMLVELRDGKGEIDDIDNLGNRRVRSVGELMENQYRLGLLRMERAIKERMSSIEIDTVMPQDLINAKPAAAAVREFFGSSQLSQFMDQVNPLSEITHKRRLSALGPGGLTRERAGFEVRDVHPTHYGRICPIETPEGPNIGLINSLATFARVNKYGFIESPYRRIVDGKVTNDVLYLSAMEEAKYYVAQANAELNADGSFVDEFVVCRHAGEVMLAPRDSMNLMDVSPKQVVSVAAALIPFLENDDANRALMGSNMQRQAVPLLRAEAPFVGTGMEPVVARDSGAAIGARRGGVVDQVDATRIVIRATEDLEAGKSGVDIYRLQKFQRSNQNTCVNQRPLVTVGDVVNRGDILADGPSTDLGDLALGRNALVAFMPWNGYNYEDSILLSERIVADDVFTSIHIEEFEVMARDTKLGPEEITRDIPNVSEEALKNLDEAGIVYIGAEVQPGDILVGKITPKGESPMTPEEKLLRAIFGEKASDVRDTSMRMPPGTYGTIVEVRVFNRHGVEKDERAMAIEREEIERLAKDRDDEQAILDRNVYGRLIDMLRGQVSIAGPKGFKKGTELSNAVVSEYPRSQWWMFAVEDEKVQSELEALRGQYDESKSRLEQRFMDKVEKVQRGDEMPPGVMKMVKVFVAVKRKIQPGDKMAGRHGNKGVVSRIVPVEDMPFLEDGTHVDVVLNPLGVPSRMNVGQILETHLGWACAGMGRQIGELIEAYKANGNIEPLRKTIGDVVGAGPKAEQVHEFDDESVLRLADQWKRGVSIATPVFDGANEGDVNDMLRLAGLKDTGQSTLYDGRTGEQFDRQVTVGYIYMLKLNHLVDDKIHARSIGPYSLVTQQPLGGKAQFGGQRFGEMEVWALEAYGAAYTLQEMLTVKSDDVAGRTKVYEAIVRGDDTFEAGIPESFNVLVKEMRSLGLSVELENTKLDEAQATQLPDAAE.

This sequence belongs to the RNA polymerase beta chain family. In terms of assembly, the RNAP catalytic core consists of 2 alpha, 1 beta, 1 beta' and 1 omega subunit. When a sigma factor is associated with the core the holoenzyme is formed, which can initiate transcription.

The catalysed reaction is RNA(n) + a ribonucleoside 5'-triphosphate = RNA(n+1) + diphosphate. In terms of biological role, DNA-dependent RNA polymerase catalyzes the transcription of DNA into RNA using the four ribonucleoside triphosphates as substrates. The chain is DNA-directed RNA polymerase subunit beta from Rhizobium etli (strain ATCC 51251 / DSM 11541 / JCM 21823 / NBRC 15573 / CFN 42).